The primary structure comprises 451 residues: Gamma-aminobutyric acid receptor subunit alpha-2 (451 aa).

A signal peptide spans 1–28; sequence MKTKLNIYNMQFLLFVFLVWDPARLVLA. Residues 29-249 lie on the Extracellular side of the membrane; the sequence is NIQEDEAKNN…MTAHFHLKRK (221 aa). A glycan (N-linked (GlcNAc...) asparagine) is linked at Asn-38. Arg-94 serves as a coordination point for 4-aminobutanoate. A glycan (N-linked (GlcNAc...) asparagine) is linked at Asn-138. Position 157 (Thr-157) interacts with 4-aminobutanoate. A disulfide bridge links Cys-166 with Cys-180. A helical membrane pass occupies residues 250-270; the sequence is IGYFVIQTYLPCIMTVILSQV. The Cytoplasmic portion of the chain corresponds to 271 to 280; sequence SFWLNRESVP. The helical transmembrane segment at 281–300 threads the bilayer; the sequence is ARTVFGVTTVLTMTTLSISA. Residues 301 to 311 are Extracellular-facing; the sequence is RNSLPKVAYAT. Residues 312–332 form a helical membrane-spanning segment; the sequence is AMDWFIAVCYAFVFSALIEFA. Over 333-420 the chain is Cytoplasmic; the sequence is TVNYFTKRGW…FNSVSKIDRM (88 aa). Residues 421-441 form a helical membrane-spanning segment; that stretch reads SRIVFPVLFGTFNLVYWATYL. Topologically, residues 442–451 are extracellular; it reads NREPVLGVSP.

The protein belongs to the ligand-gated ion channel (TC 1.A.9) family. Gamma-aminobutyric acid receptor (TC 1.A.9.5) subfamily. GABRA2 sub-subfamily. In terms of assembly, heteropentamer, formed by a combination of alpha (GABRA1-6), beta (GABRB1-3), gamma (GABRG1-3), delta (GABRD), epsilon (GABRE), rho (GABRR1-3), pi (GABRP) and theta (GABRQ) subunits, each subunit exhibiting distinct physiological and pharmacological properties. Interacts with UBQLN1. Interacts with KIF21B. Interacts with LHFPL4. Interacts with SHISA7; interaction leads to the regulation of GABA(A) receptor trafficking, channel deactivation kinetics and pharmacology. In terms of processing, glycosylated.

The protein localises to the postsynaptic cell membrane. It is found in the cell membrane. It localises to the cytoplasmic vesicle membrane. Its subcellular location is the cell projection. The protein resides in the dendrite. The enzyme catalyses chloride(in) = chloride(out). Activated by pentobarbital. Inhibited by the antagonist bicuculline. In terms of biological role, alpha subunit of the heteropentameric ligand-gated chloride channel gated by gamma-aminobutyric acid (GABA), a major inhibitory neurotransmitter in the brain. GABA-gated chloride channels, also named GABA(A) receptors (GABAAR), consist of five subunits arranged around a central pore and contain GABA active binding site(s) located at the alpha and beta subunit interfaces. When activated by GABA, GABAARs selectively allow the flow of chloride anions across the cell membrane down their electrochemical gradient. Chloride influx into the postsynaptic neuron following GABAAR opening decreases the neuron ability to generate a new action potential, thereby reducing nerve transmission. The alpha-2 subunit exhibits synaptogenic activity together with beta-2 and very little to no activity together with beta-3, the gamma-2 subunit being necessary but not sufficient to induce rapid synaptic contacts formation. The chain is Gamma-aminobutyric acid receptor subunit alpha-2 from Homo sapiens (Human).